We begin with the raw amino-acid sequence, 40 residues long: MADTTGRIPLWLIGTVTGILVIGLIGVFFYGSYSGLGSSL.

The chain crosses the membrane as a helical span at residues Ile8 to Phe28.

The protein belongs to the PsbJ family. As to quaternary structure, PSII is composed of 1 copy each of membrane proteins PsbA, PsbB, PsbC, PsbD, PsbE, PsbF, PsbH, PsbI, PsbJ, PsbK, PsbL, PsbM, PsbT, PsbX, PsbY, PsbZ, Psb30/Ycf12, at least 3 peripheral proteins of the oxygen-evolving complex and a large number of cofactors. It forms dimeric complexes.

The protein localises to the plastid. Its subcellular location is the chloroplast thylakoid membrane. Functionally, one of the components of the core complex of photosystem II (PSII). PSII is a light-driven water:plastoquinone oxidoreductase that uses light energy to abstract electrons from H(2)O, generating O(2) and a proton gradient subsequently used for ATP formation. It consists of a core antenna complex that captures photons, and an electron transfer chain that converts photonic excitation into a charge separation. The polypeptide is Photosystem II reaction center protein J (Nymphaea alba (White water-lily)).